The sequence spans 210 residues: Glycerol-3-phosphate acyltransferase 2 (210 aa).

The next 6 membrane-spanning stretches (helical) occupy residues 4-24 (LIMV…PAPY), 52-72 (VGFW…ALAM), 73-93 (AVAN…LMAI), 114-134 (IGIL…CFLI), 141-161 (FPTL…WLGQ), and 163-183 (DMGK…MYIP).

Belongs to the PlsY family. As to quaternary structure, probably interacts with PlsX.

It localises to the cell membrane. The enzyme catalyses an acyl phosphate + sn-glycerol 3-phosphate = a 1-acyl-sn-glycero-3-phosphate + phosphate. The protein operates within lipid metabolism; phospholipid metabolism. Its function is as follows. Catalyzes the transfer of an acyl group from acyl-phosphate (acyl-PO(4)) to glycerol-3-phosphate (G3P) to form lysophosphatidic acid (LPA). This enzyme utilizes acyl-phosphate as fatty acyl donor, but not acyl-CoA or acyl-ACP. This Dehalococcoides mccartyi (strain CBDB1) protein is Glycerol-3-phosphate acyltransferase 2.